The following is an 824-amino-acid chain: Frameshifted structural polyprotein (824 aa).

The segment covering 1–10 has biased composition (polar residues); it reads MEFIPTQTFY. The tract at residues 1–104 is disordered; that stretch reads MEFIPTQTFY…KKKKPGRRER (104 aa). Over residues 22-44 the composition is skewed to low complexity; that stretch reads RPTIQVIRPRPRPQRQAGQLAQL. Residues 36-68 form a host transcription inhibition region; the sequence is RQAGQLAQLISAVNKLTMRAVPQQKPRKNRKNK. Residues 60 to 72 show a composition bias toward basic residues; it reads KPRKNRKNKKQKQ. The Nuclear localization signal signature appears at 61 to 99; sequence PRKNRKNKKQKQKQQAPQNNTNQKKQPPKKKPAQKKKKP. Low complexity predominate over residues 73–85; the sequence is KQQAPQNNTNQKK. Residues 84–114 are binding to the viral RNA; sequence KKQPPKKKPAQKKKKPGRRERMCMKIENDCI. The segment covering 86–101 has biased composition (basic residues); the sequence is QPPKKKPAQKKKKPGR. Ribosome-binding stretches follow at residues 91 to 100 and 99 to 113; these read KPAQKKKKPG and PGRR…ENDC. A disulfide bond links Cys-113 and Cys-128. A Peptidase S3 domain is found at 113-261; the sequence is CIFEVKHEGK…KITPEGAEEW (149 aa). The active-site Charge relay system is the His-139. The short motif at 144–154 is the Nuclear export signal element; the sequence is IDNADLAKLAF. The active-site Charge relay system is the Asp-161. Residues 183 to 193 are dimerization of the capsid protein; the sequence is PEGYYNWHHGA. Catalysis depends on Ser-213, which acts as the Charge relay system. Residues 219–223 form a dimerization of the capsid protein region; sequence DNKGR. Residues 262–274 are functions as an uncleaved signal peptide for the precursor of protein E3/E2; the sequence is SLAIPVMCLLANT. The Extracellular segment spans residues 262–692; that stretch reads SLAIPVMCLL…YYYELYPTMT (431 aa). 3 N-linked (GlcNAc...) asparagine; by host glycosylation sites follow: Asn-273, Asn-588, and Asn-670. A helical membrane pass occupies residues 693 to 713; that stretch reads VVVVSVASFILLSMVGMAVGM. Residues 714-748 lie on the Cytoplasmic side of the membrane; that stretch reads CMCARRRCITPYELTPGATVPFLLSLICCIRTAKA. Residues Cys-721, Cys-741, and Cys-742 are each lipidated (S-palmitoyl cysteine; by host). Residues 721–741 are transient transmembrane before p62-6K protein processing; it reads CITPYELTPGATVPFLLSLIC. Residues 749–763 lie on the Extracellular side of the membrane; that stretch reads ATYQEAAVYLWNEQQ. Residues 764–784 form a helical membrane-spanning segment; sequence PLFWLQALIPLAALIVLCNCL. Topologically, residues 785-795 are cytoplasmic; sequence RLLPCCCKTLA.

Belongs to the alphavirus frameshifted structural polyprotein family. As to quaternary structure, homodimer. Homomultimer. Interacts with host karyopherin KPNA4; this interaction allows the nuclear import of the viral capsid protein. Interacts with spike glycoprotein E2. Interacts with host IRAK1; the interaction leads to inhibition of IRAK1-dependent signaling. In terms of assembly, the precursor of protein E3/E2 and E1 form a heterodimer shortly after synthesis. Processing of the precursor of protein E3/E2 into E2 and E3 results in a heterodimer of the spike glycoproteins E2 and E1. Spike at virion surface are constituted of three E2-E1 heterodimers. Interacts with 6K protein. Interacts with host MXRA8; this interaction mediates virus entry. Specific enzymatic cleavages in vivo yield mature proteins. Capsid protein is auto-cleaved during polyprotein translation, unmasking a signal peptide at the N-terminus of the precursor of E3/E2. The remaining polyprotein is then targeted to the host endoplasmic reticulum, where host signal peptidase cleaves it into pE2 and TF. pE2 is further processed to mature E3 and E2 by host furin in trans-Golgi vesicle. Post-translationally, palmitoylated via thioester bonds. These palmitoylations may induce disruption of the C-terminus transmembrane. This would result in the reorientation of E2 C-terminus from lumenal to cytoplasmic side. In terms of processing, palmitoylated via thioester bonds.

It localises to the virion. Its subcellular location is the host cytoplasm. The protein resides in the host cell membrane. It is found in the host nucleus. The protein localises to the virion membrane. The enzyme catalyses Autocatalytic release of the core protein from the N-terminus of the togavirus structural polyprotein by hydrolysis of a -Trp-|-Ser- bond.. Forms an icosahedral capsid with a T=4 symmetry composed of 240 copies of the capsid protein surrounded by a lipid membrane through which penetrate 80 spikes composed of trimers of E1-E2 heterodimers. The capsid protein binds to the viral RNA genome at a site adjacent to a ribosome binding site for viral genome translation following genome release. Possesses a protease activity that results in its autocatalytic cleavage from the nascent structural protein. Following its self-cleavage, the capsid protein transiently associates with ribosomes, and within several minutes the protein binds to viral RNA and rapidly assembles into icosahedric core particles. The resulting nucleocapsid eventually associates with the cytoplasmic domain of the spike glycoprotein E2 at the cell membrane, leading to budding and formation of mature virions. In case of infection, new virions attach to target cells and after clathrin-mediated endocytosis their membrane fuses with the host endosomal membrane. This leads to the release of the nucleocapsid into the cytoplasm, followed by an uncoating event necessary for the genomic RNA to become accessible. The uncoating might be triggered by the interaction of capsid proteins with ribosomes. Binding of ribosomes would release the genomic RNA since the same region is genomic RNA-binding and ribosome-binding. Specifically inhibits interleukin-1 receptor-associated kinase 1/IRAK1-dependent signaling during viral entry, representing a means by which the alphaviruses may evade innate immune detection and activation prior to viral gene expression. Functionally, provides the signal sequence for the translocation of the precursor of protein E3/E2 to the host endoplasmic reticulum. Furin-cleaved E3 remains associated with spike glycoprotein E1 and mediates pH protection of the latter during the transport via the secretory pathway. After virion release from the host cell, the assembly protein E3 is gradually released in the extracellular space. Its function is as follows. Plays a role in viral attachment to target host cell, by binding to the cell receptor. Synthesized as a p62 precursor which is processed by furin at the cell membrane just before virion budding, giving rise to E2-E1 heterodimer. The p62-E1 heterodimer is stable, whereas E2-E1 is unstable and dissociate at low pH. p62 is processed at the last step, presumably to avoid E1 fusion activation before its final export to cell surface. E2 C-terminus contains a transitory transmembrane that would be disrupted by palmitoylation, resulting in reorientation of the C-terminal tail from lumenal to cytoplasmic side. This step is critical since E2 C-terminus is involved in budding by interacting with capsid proteins. This release of E2 C-terminus in cytoplasm occurs lately in protein export, and precludes premature assembly of particles at the endoplasmic reticulum membrane. In terms of biological role, plays a role in viral assembly and release. This chain is Frameshifted structural polyprotein, found in Aedes aegypti (Yellowfever mosquito).